The following is a 1011-amino-acid chain: RAS protein activator like-3 (1011 aa).

The segment at 1 to 38 is disordered; sequence MDPPSPSRTSQTQPTATSPLTSYRWHTGGGGEKAAGGF. Low complexity predominate over residues 7-22; sequence SRTSQTQPTATSPLTS. Phosphoserine occurs at positions 18 and 51. Disordered regions lie at residues 52-136, 151-197, and 209-230; these read HQEP…PVWD, GGEE…GPNQ, and KEKK…GSRE. The span at 81–95 shows a compositional bias: basic residues; it reads SRLRLSKALWGRHKN. Residues 100 to 117 show a composition bias toward acidic residues; that stretch reads PDPEPEQEAPELEPEPEL. The segment covering 118–131 has biased composition (pro residues); it reads EPPTPQIPEAPTPN. A phosphoserine mark is found at Ser164, Ser166, Ser167, and Ser170. The span at 179–190 shows a compositional bias: basic and acidic residues; it reads RDPDRMPGKTEP. Residues 197–293 form the PH domain; sequence QVHNVRGLLK…WIEDLRRQFQ (97 aa). Phosphoserine occurs at positions 224, 228, and 231. A Phosphothreonine modification is found at Thr234. One can recognise a C2 domain in the interval 284-404; the sequence is WIEDLRRQFQ…APAAGLERWF (121 aa). The Ras-GAP domain occupies 474-682; sequence GRAQALVTDL…PAMQCFLDQV (209 aa). 2 disordered regions span residues 756–885 and 987–1011; these read QVHS…LGTH and LSPR…GDTT. A phosphoserine mark is found at Ser787 and Ser790. The span at 792–808 shows a compositional bias: basic and acidic residues; that stretch reads RRSESWARPRPDEERPL. 2 stretches are compositionally biased toward polar residues: residues 871-882 and 987-999; these read QMDQPQDRNQAL and LSPR…SQPQ. Positions 888–988 form a coiled coil; the sequence is VNKLAELQCE…RDAVQSLQLS (101 aa). Ser988 carries the phosphoserine modification.

As to expression, predominantly expressed in cells of hematopoietic lineages.

It is found in the cytoplasm. Its subcellular location is the cell cortex. Functionally, functions as a Ras GTPase-activating protein. Plays an important role in the expansion and functions of natural killer T (NKT) cells in the liver by negatively regulating RAS activity and the down-stream ERK signaling pathway. This chain is RAS protein activator like-3 (RASAL3), found in Homo sapiens (Human).